The following is an 87-amino-acid chain: Toxin CngtIII (87 aa).

A signal peptide spans 1–19 (MNSLLMITACLVLFGTVWA). In terms of domain architecture, LCN-type CS-alpha/beta spans 20 to 85 (KEGYLVNKST…TYPLPNKTCS (66 aa)). Intrachain disulfides connect Cys-31–Cys-84, Cys-35–Cys-60, Cys-44–Cys-65, and Cys-48–Cys-67.

The protein belongs to the long (4 C-C) scorpion toxin superfamily. Sodium channel inhibitor family. Beta subfamily. In terms of tissue distribution, expressed by the venom gland.

Its subcellular location is the secreted. Functionally, beta toxins bind voltage-independently at site-4 of sodium channels (Nav) and shift the voltage of activation toward more negative potentials thereby affecting sodium channel activation and promoting spontaneous and repetitive firing. This Centruroides noxius (Mexican scorpion) protein is Toxin CngtIII.